Here is a 98-residue protein sequence, read N- to C-terminus: Small ribosomal subunit protein bS6 (98 aa).

This sequence belongs to the bacterial ribosomal protein bS6 family.

Functionally, binds together with bS18 to 16S ribosomal RNA. The polypeptide is Small ribosomal subunit protein bS6 (Lactobacillus johnsonii (strain CNCM I-12250 / La1 / NCC 533)).